Reading from the N-terminus, the 360-residue chain is Protein Wnt-2 (360 aa).

The signal sequence occupies residues 1 to 25; it reads MNAPLGGIWLGLPLLLTWLSPEVSS. Disulfide bonds link cysteine 76/cysteine 87, cysteine 127/cysteine 135, cysteine 137/cysteine 157, cysteine 206/cysteine 220, cysteine 208/cysteine 215, cysteine 278/cysteine 309, cysteine 294/cysteine 304, cysteine 308/cysteine 348, cysteine 324/cysteine 339, cysteine 326/cysteine 336, and cysteine 331/cysteine 332. Residue serine 212 is the site of O-palmitoleoyl serine; by PORCN attachment. Asparagine 295 is a glycosylation site (N-linked (GlcNAc...) asparagine).

The protein belongs to the Wnt family. Palmitoleoylation is required for efficient binding to frizzled receptors. Depalmitoleoylation leads to Wnt signaling pathway inhibition.

Its subcellular location is the secreted. It is found in the extracellular space. It localises to the extracellular matrix. Functionally, ligand for members of the frizzled family of seven transmembrane receptors. Probable developmental protein. May be a signaling molecule which affects the development of discrete regions of tissues. Is likely to signal over only few cell diameters. The protein is Protein Wnt-2 (WNT2) of Oryctolagus cuniculus (Rabbit).